Consider the following 691-residue polypeptide: MGRAKSMVSLLLVLFLVRAHVATTETTTEFIFHGFKGNQSEIHMQGDSTITSNGLLRLTDRNSDVVGTAFYHKPVRLLDSNSTNTTVRSFSTSFIFIIPSSSTSNGGFGFTFTLSPTPNRTDADPEQYMGLLNERNDGNSSNHVFAVEFDTVQGFKDGTNRIGNHIGLNFNSLSSDVQEPVAYFNNNDSQKEEFQLVSGEPIQVFLDYHGPTKTLNLTVYPTRLGYKPRIPLISREVPKLSDIVVDEMFVGFTAATGRHGQSSAHYVMGWSFASGGEHPLAAMLDISQLPPPPPNKAKKRGYNGKVIALIVALSTVISIMLVLLFLFMMYKKRMQQEEILEDWEIDHPHRFRYRDLYKATEGFKENRVVGTGGFGIVYRGNIRSSSDQIAVKKITPNSMQGVREFVAEIESLGRLRHKNLVNLQGWCKHRNDLLLIYDYIPNGSLDSLLYSKPRRSGAVLSWNARFQIAKGIASGLLYLHEEWEQIVIHRDVKPSNVLIDSDMNPRLGDFGLARLYERGSQSCTTVVVGTIGYMAPELARNGNSSSASDVFAFGVLLLEIVSGRKPTDSGTFFIADWVMELQASGEILSAIDPRLGSGYDEGEARLALAVGLLCCHHKPESRPLMRMVLRYLNRDEDVPEIHDNWGYSDSSRTDLGSKLVGYISSDRASSSHSHTSSSLTRISSTSLISGR.

Positions 1–19 (MGRAKSMVSLLLVLFLVRA) are cleaved as a signal peptide. The Extracellular portion of the chain corresponds to 20–306 (HVATTETTTE…AKKRGYNGKV (287 aa)). The tract at residues 26–273 (TTTEFIFHGF…AHYVMGWSFA (248 aa)) is legume-lectin like. A helical membrane pass occupies residues 307-327 (IALIVALSTVISIMLVLLFLF). The Cytoplasmic segment spans residues 328–691 (MMYKKRMQQE…ISSTSLISGR (364 aa)). The 279-residue stretch at 363 to 641 (FKENRVVGTG…LNRDEDVPEI (279 aa)) folds into the Protein kinase domain. ATP is bound by residues 369–377 (VGTGGFGIV) and Lys-392. Asp-491 serves as the catalytic Proton acceptor.

It in the C-terminal section; belongs to the protein kinase superfamily. Ser/Thr protein kinase family. This sequence in the N-terminal section; belongs to the leguminous lectin family.

The protein resides in the cell membrane. It catalyses the reaction L-seryl-[protein] + ATP = O-phospho-L-seryl-[protein] + ADP + H(+). The enzyme catalyses L-threonyl-[protein] + ATP = O-phospho-L-threonyl-[protein] + ADP + H(+). Involved in negative regulation of abscisic acid response in seed germination. The polypeptide is Lectin-domain containing receptor kinase VI.4 (LECRK64) (Arabidopsis thaliana (Mouse-ear cress)).